We begin with the raw amino-acid sequence, 87 residues long: Small ribosomal subunit protein bS16c (87 aa).

It belongs to the bacterial ribosomal protein bS16 family.

Its subcellular location is the plastid. The protein resides in the chloroplast. The sequence is that of Small ribosomal subunit protein bS16c from Zygnema circumcarinatum (Green alga).